The following is a 469-amino-acid chain: 3-isopropylmalate dehydratase large subunit (469 aa).

Residues C347, C407, and C410 each contribute to the [4Fe-4S] cluster site.

The protein belongs to the aconitase/IPM isomerase family. LeuC type 1 subfamily. As to quaternary structure, heterodimer of LeuC and LeuD. [4Fe-4S] cluster is required as a cofactor.

It catalyses the reaction (2R,3S)-3-isopropylmalate = (2S)-2-isopropylmalate. It participates in amino-acid biosynthesis; L-leucine biosynthesis; L-leucine from 3-methyl-2-oxobutanoate: step 2/4. Its function is as follows. Catalyzes the isomerization between 2-isopropylmalate and 3-isopropylmalate, via the formation of 2-isopropylmaleate. The polypeptide is 3-isopropylmalate dehydratase large subunit (Synechococcus sp. (strain RCC307)).